A 366-amino-acid polypeptide reads, in one-letter code: MEDEDECPELVPIKEKPSGPTAQIPVTIITGYLGAGKTTLLNYILTEQHNKRIAVILNEFGEGSALEKSLAVSQAGELYEEWLELRNGCLCCSVKDNGLKAIENLMEKKGKFDYILLETTGLADPGAVASMFWVDAELGSDVYLDGIVTVIDAKYGLQHLTEEKPEGLINEAARQIALADLTIINKTDLVHETELLKLRDTVRSINALVKILETQKSRVDLSEVLDLHSFDTKDGERLTKKLQLVKTSQPHLDKSMLTITFEVPGSVSEDLLNIFIQELLWEKTFKNKAGLPMTVIRLKGILSLQQKQKKVMLQGVHELYELEETPEFWADQEPRLNRLVFIGRNLDGEILKKEFISAVSNKDSVE.

Residues 5–12 (DECPELVP) carry the psi-PxLVp motif motif. Residue 31-38 (GYLGAGKT) coordinates GTP. Cys89, Cys91, and Cys92 together coordinate Zn(2+). Residues 89–92 (CLCC) carry the CXCC motif motif. GTP-binding positions include 92-96 (CSVKD) and 185-188 (NKTD). The region spanning 258-357 (TITFEVPGSV…GEILKKEFIS (100 aa)) is the CobW C-terminal domain.

The protein belongs to the SIMIBI class G3E GTPase family. ZNG1 subfamily.

Its subcellular location is the nucleus. The enzyme catalyses GTP + H2O = GDP + phosphate + H(+). In terms of biological role, zinc chaperone that directly transfers zinc cofactor to target metalloproteins, thereby activating them. Catalyzes zinc insertion into the active site of methionine aminopeptidase METAP1, which function to cleave the initiator methionine from polypeptides during or after protein translation. Mechanistically, the N-terminal psi-PxLVp motif binds to the C6H2-type zinc finger of inactive form of METAP1. After formation of the docked complex, zinc is transferred from the CXCC motif in the GTPase domain of ZNG1 to the zinc binding site in the peptidase domain of METAP1 in a process requiring GTP hydrolysis. GTP/GDP exchange is required for release of active METAP1. This chain is Zinc-regulated GTPase metalloprotein activator 1, found in Danio rerio (Zebrafish).